Here is a 740-residue protein sequence, read N- to C-terminus: Protein SIEVE ELEMENT OCCLUSION B (740 aa).

The segment covering Met1–Thr23 has biased composition (polar residues). Residues Met1–Glu27 form a disordered region.

In terms of assembly, can form homodimer. As to expression, expressed in phloem sieve elements.

In terms of biological role, scaffold protein required to form the phloem filament matrix in sieve elements. The sequence is that of Protein SIEVE ELEMENT OCCLUSION B from Arabidopsis thaliana (Mouse-ear cress).